The following is a 423-amino-acid chain: Mannose-6-phosphate isomerase (423 aa).

Ala-2 carries the post-translational modification N-acetylalanine. Phosphoserine is present on residues Ser-102 and Ser-108. Zn(2+) contacts are provided by Gln-110, His-112, Glu-137, and His-276. Arg-295 is an active-site residue.

It belongs to the mannose-6-phosphate isomerase type 1 family. It depends on Zn(2+) as a cofactor.

Its subcellular location is the cytoplasm. It carries out the reaction D-mannose 6-phosphate = D-fructose 6-phosphate. Its pathway is nucleotide-sugar biosynthesis; GDP-alpha-D-mannose biosynthesis; alpha-D-mannose 1-phosphate from D-fructose 6-phosphate: step 1/2. Isomerase that catalyzes the interconversion of fructose-6-P and mannose-6-P and has a critical role in the supply of D-mannose derivatives required for many eukaryotic glycosylation reactions. The chain is Mannose-6-phosphate isomerase (MPI) from Macaca fascicularis (Crab-eating macaque).